The following is a 429-amino-acid chain: Alpha-L-rhamnosidase rgxB (429 aa).

A signal peptide spans 1 to 20 (MAPIALKILLFTSLIVPSIS). 7 N-linked (GlcNAc...) asparagine glycosylation sites follow: N67, N77, N97, N103, N112, N135, and N219. The PbH1 1 repeat unit spans residues 217–238 (SKNITLTNWEVVNGDDSISTKA). D231 (proton donor) is an active-site residue. N-linked (GlcNAc...) asparagine glycans are attached at residues N239, N247, N278, and N344. 2 PbH1 repeats span residues 240-260 (STDITIANCTFTSGLGIAIGS) and 271-292 (VERLKISNITYEKTTHAVYFKT). The cysteines at positions 374 and 380 are disulfide-linked. Residues N387, N395, and N414 are each glycosylated (N-linked (GlcNAc...) asparagine).

The protein belongs to the glycosyl hydrolase 28 family.

It is found in the secreted. The catalysed reaction is Hydrolysis of terminal non-reducing alpha-L-rhamnose residues in alpha-L-rhamnosides.. In terms of biological role, alpha-L-rhamnosidase which is able to degrade p-nitrophenyl-alpha-L-rhamnopyranoside (pnp_Rha). The natural substrate of this enzyme has not been identified yet. The sequence is that of Alpha-L-rhamnosidase rgxB (rgxB) from Aspergillus niger (strain ATCC MYA-4892 / CBS 513.88 / FGSC A1513).